We begin with the raw amino-acid sequence, 125 residues long: uncharacterized protein (125 aa).

The protein belongs to the asfivirus H124R family.

It localises to the virion. This is an uncharacterized protein from Ornithodoros (relapsing fever ticks).